A 252-amino-acid chain; its full sequence is tRNA (guanine-N(1)-)-methyltransferase (252 aa).

Residues glycine 116 and 135–140 contribute to the S-adenosyl-L-methionine site; that span reads LGDYVL.

It belongs to the RNA methyltransferase TrmD family. As to quaternary structure, homodimer.

The protein resides in the cytoplasm. It carries out the reaction guanosine(37) in tRNA + S-adenosyl-L-methionine = N(1)-methylguanosine(37) in tRNA + S-adenosyl-L-homocysteine + H(+). Its function is as follows. Specifically methylates guanosine-37 in various tRNAs. In Limosilactobacillus reuteri (strain DSM 20016) (Lactobacillus reuteri), this protein is tRNA (guanine-N(1)-)-methyltransferase.